The following is a 64-amino-acid chain: DNA gyrase inhibitor YacG (64 aa).

Residues Cys-9, Cys-12, Cys-28, and Cys-32 each coordinate Zn(2+). The tract at residues 45 to 64 (KRIPSAGDLSDSDDWSEQQP) is disordered. The segment covering 54–64 (SDSDDWSEQQP) has biased composition (acidic residues).

Belongs to the DNA gyrase inhibitor YacG family. Interacts with GyrB. It depends on Zn(2+) as a cofactor.

Functionally, inhibits all the catalytic activities of DNA gyrase by preventing its interaction with DNA. Acts by binding directly to the C-terminal domain of GyrB, which probably disrupts DNA binding by the gyrase. This chain is DNA gyrase inhibitor YacG, found in Klebsiella pneumoniae (strain 342).